Here is a 188-residue protein sequence, read N- to C-terminus: PRA1 family protein 3 (188 aa).

Residue Met-1 is modified to N-acetylmethionine. Residues Met-1–Arg-35 are Cytoplasmic-facing. 2 helical membrane passes run Val-36–Ser-56 and Ile-57–Phe-77. At Thr-78–Met-93 the chain is on the cytoplasmic side. 2 helical membrane passes run Lys-94–Ser-114 and Met-115–Ile-135. Residues Met-103–Gly-117 are required for homodimer formation and heterodimer formation with ARL6IP1. Residues His-136 to Glu-188 lie on the Cytoplasmic side of the membrane. The interval His-136–Glu-188 is targeting to endoplasmic reticulum membrane.

This sequence belongs to the PRA1 family. As to quaternary structure, homodimer. Heterodimer with ARL6IP1. Forms multimers. Interacts with ARL6. Interacts with prenylated RAB1A and RAB3A. Interacts with SLC1A1/EAAC1. Interacts with RTN2 (via first transmembrane domain). Does not interact with VAMP1, VAMP2 or VAMP3.

The protein resides in the endoplasmic reticulum membrane. Its subcellular location is the cell membrane. The protein localises to the cytoplasm. It localises to the cytoskeleton. Its function is as follows. Regulates intracellular concentrations of taurine and glutamate. Negatively modulates SLC1A1/EAAC1 glutamate transport activity by decreasing its affinity for glutamate in a PKC activity-dependent manner. Plays a role in the retention of SLC1A1/EAAC1 in the endoplasmic reticulum. The sequence is that of PRA1 family protein 3 (ARL6IP5) from Homo sapiens (Human).